We begin with the raw amino-acid sequence, 573 residues long: NEDD4-binding protein 3-B (573 aa).

3 disordered regions span residues glutamate 119–proline 138, cysteine 173–serine 220, and glycine 384–aspartate 405. Positions leucine 125–arginine 135 are enriched in basic and acidic residues. A compositionally biased stretch (low complexity) spans serine 186 to serine 196. Polar residues-rich tracts occupy residues aspartate 207–serine 220 and lysine 392–proline 401. Residues glutamate 287–serine 474 are a coiled coil.

It belongs to the N4BP3 family.

The protein resides in the cytoplasmic vesicle. The protein localises to the cell projection. It localises to the axon. It is found in the dendrite. Plays a role in axon and dendrite arborization during cranial nerve development. Also important for neural crest migration and early development of other anterior structures including eye, brain and cranial cartilage. This chain is NEDD4-binding protein 3-B, found in Xenopus laevis (African clawed frog).